We begin with the raw amino-acid sequence, 261 residues long: Hemin import ATP-binding protein HmuV (261 aa).

Residues 7 to 243 (LRGQNLSLQF…EIIDAVYGYK (237 aa)) enclose the ABC transporter domain. 39 to 46 (GPNGAGKS) provides a ligand contact to ATP.

This sequence belongs to the ABC transporter superfamily. Heme (hemin) importer (TC 3.A.1.14.5) family. In terms of assembly, the complex is composed of two ATP-binding proteins (HmuV), two transmembrane proteins (HmuU) and a solute-binding protein (HmuT).

The protein resides in the cell inner membrane. Functionally, part of the ABC transporter complex HmuTUV involved in hemin import. Responsible for energy coupling to the transport system. This Vibrio vulnificus (strain YJ016) protein is Hemin import ATP-binding protein HmuV.